A 402-amino-acid chain; its full sequence is O-glucosyltransferase rumi homolog (402 aa).

A signal peptide spans 1-20 (MPYLEIVLALLVLSFQLGHS). 4 cysteine pairs are disulfide-bonded: C67-C74, C72-C375, C118-C124, and C279-C302. The N-linked (GlcNAc...) asparagine glycan is linked to N71. D149 (proton donor/acceptor) is an active-site residue. The interval 189 to 194 (AISLYP) is interaction with the consensus sequence C-X-S-X-[PA]-C in peptide substrates. UDP-alpha-D-glucose is bound by residues 226–230 (RGSRT), R234, 273–275 (VRL), and 291–295 (AASFR).

Belongs to the glycosyltransferase 90 family.

It localises to the endoplasmic reticulum lumen. It is found in the secreted. Its pathway is protein modification; protein glycosylation. In terms of biological role, protein O-glucosyltransferase. Catalyzes the reaction that attaches glucose through an O-glycosidic linkage to a conserved serine residue found in the consensus sequence C-X-S-X-[PA]-C in epidermal growth factor-like repeats. Regulates Notch signaling by glucosylating Notch in the ER, glucosylation is required for the correct folding and cleavage of Notch. The sequence is that of O-glucosyltransferase rumi homolog from Aedes aegypti (Yellowfever mosquito).